Consider the following 332-residue polypeptide: Melanocortin receptor 4 (332 aa).

Residues 1–43 (MVNSTHRGMHASLHLWNRSSHRLHSNASESLGKGYSDGGCYEQ) are Extracellular-facing. Residues Asn3, Asn17, and Asn26 are each glycosylated (N-linked (GlcNAc...) asparagine). 2 disulfide bridges follow: Cys40–Cys279 and Cys271–Cys277. Residues 44–69 (LFVSPEVFVTLGVISLLENILVIVAI) form a helical membrane-spanning segment. Residues 70–81 (AKNKNLHSPMYF) are Cytoplasmic-facing. A helical transmembrane segment spans residues 82–106 (FICSLAVADMLVSVSNGSETIVITL). 3 residues coordinate Ca(2+): Glu100, Asp122, and Asp126. Over 107–123 (LNSTDTDTQSFTVNIDN) the chain is Extracellular. The chain crosses the membrane as a helical span at residues 124–145 (VIDSVICSSLLASICSLLSIAV). At 146-165 (DRYFTIFYALQYHNIMTVKR) the chain is on the cytoplasmic side. The chain crosses the membrane as a helical span at residues 166–186 (VRIIISCIWAACTVSGILFII). At 187–191 (YSDSS) the chain is on the extracellular side. Residues 192–215 (AVIICLITMFFTMLALMASLYVHM) form a helical membrane-spanning segment. The Cytoplasmic segment spans residues 216–248 (FLMARLHIKRIAVLPGTGAIRQGANMKGAITLT). Residues 249–271 (ILIGVFVVCWAPFFLHLIFYISC) form a helical membrane-spanning segment. Residues 272 to 280 (PQNPYCVCF) lie on the Extracellular side of the membrane. A helical membrane pass occupies residues 281 to 304 (MSHFNLYLILIMCNSVIDPLIYAL). Topologically, residues 305-332 (RSQELRKTFKEIICCYPLGGLCDLSSRY) are cytoplasmic. Cys318 is lipidated: S-palmitoyl cysteine.

It belongs to the G-protein coupled receptor 1 family. Homodimer; disulfide-linked, also forms higher order oligomers. Interacts with GNAS. Interacts with ATRNL1. Interacts with MGRN1; this interaction competes with GNAS-binding and thus inhibits agonist-induced cAMP production. Interacts with MRAP and MRAP2; these associated factors increase ligand-sensitivity and generation of cAMP.

The protein localises to the cell membrane. In terms of biological role, hormone receptor that acts as a key component of the leptin-melanocortin pathway at the intersection of homeostatic maintenance of energetic state. Plays a role in regulating food intake: activation by a stimulating hormone such as anorexigenic alpha-melanocyte stimulating hormone (alpha-MSH) inhibits appetite, whereas binding to a natural antagonist like Agouti-related protein/AGRP promotes appetite. G-protein-coupled receptor that activates conventional Galphas signaling leading to induction of anorexogenic signaling in the hypothalamus to result in negative energy balance. Regulates the firing activity of neurons from the hypothalamus by alpha-MSH and AGRP independently of Galphas signaling by ligand-induced coupling of closure of inwardly rectifying potassium channel KCNJ13. In intestinal epithelial cells, plays a role in the inhibition of hepatic glucose production via nesfatin-1/NUCB2 leading to increased cyclic adenosine monophosphate (cAMP) levels and glucagon-like peptide 1 (GLP-1) secretion in the intestinal epithelium. This chain is Melanocortin receptor 4 (MC4R), found in Macaca fascicularis (Crab-eating macaque).